We begin with the raw amino-acid sequence, 483 residues long: ATP synthase subunit beta (483 aa).

Residue 169–176 coordinates ATP; that stretch reads GGAGVGKT.

This sequence belongs to the ATPase alpha/beta chains family. F-type ATPases have 2 components, CF(1) - the catalytic core - and CF(0) - the membrane proton channel. CF(1) has five subunits: alpha(3), beta(3), gamma(1), delta(1), epsilon(1). CF(0) has three main subunits: a(1), b(2) and c(9-12). The alpha and beta chains form an alternating ring which encloses part of the gamma chain. CF(1) is attached to CF(0) by a central stalk formed by the gamma and epsilon chains, while a peripheral stalk is formed by the delta and b chains.

The protein localises to the cell membrane. It catalyses the reaction ATP + H2O + 4 H(+)(in) = ADP + phosphate + 5 H(+)(out). Produces ATP from ADP in the presence of a proton gradient across the membrane. The catalytic sites are hosted primarily by the beta subunits. This Rhodococcus opacus (strain B4) protein is ATP synthase subunit beta.